The following is a 208-amino-acid chain: Fucoxanthin-chlorophyll a-c binding protein, chloroplastic (208 aa).

The N-terminal 31 residues, 1–31 (MMTLASLPSTAIAGLASAAPKVQPRMAANDE), are a transit peptide targeting the chloroplast. The helical transmembrane segment at 102–118 (IPQLPYWLWIVMTIGIG) threads the bilayer.

The protein belongs to the fucoxanthin chlorophyll protein family. The LHC complex of chromophytic algae is composed of fucoxanthin, chlorophyll A and C bound non-covalently by fucoxanthin chlorophyll proteins (FCPs). The ratio of pigments in this LHC is; fucoxanthin: chlorophyll C: chlorophyll A; (0.6-1): (0.1-0.3): (1).

It is found in the plastid. The protein localises to the chloroplast thylakoid membrane. Functionally, the light-harvesting complex (LHC) functions as a light receptor, it captures and delivers excitation energy to photosystems with which it is closely associated. Energy is transferred from the carotenoid and chlorophyll C (or B) to chlorophyll A and the photosynthetic reaction centers where it is used to synthesize ATP and reducing power. The polypeptide is Fucoxanthin-chlorophyll a-c binding protein, chloroplastic (FCP) (Isochrysis galbana (Marine planktonic alga)).